A 329-amino-acid polypeptide reads, in one-letter code: GTP 3',8-cyclase (329 aa).

One can recognise a Radical SAM core domain in the interval 8–234 (AFARKFYYLR…QLRQRSDGPA (227 aa)). Residue arginine 17 coordinates GTP. Residues cysteine 24 and cysteine 28 each contribute to the [4Fe-4S] cluster site. S-adenosyl-L-methionine is bound at residue tyrosine 30. Cysteine 31 is a binding site for [4Fe-4S] cluster. Arginine 68 is a GTP binding site. Glycine 72 contributes to the S-adenosyl-L-methionine binding site. Threonine 99 contacts GTP. Serine 123 lines the S-adenosyl-L-methionine pocket. A GTP-binding site is contributed by lysine 160. Methionine 194 serves as a coordination point for S-adenosyl-L-methionine. Cysteine 257 and cysteine 260 together coordinate [4Fe-4S] cluster. 262 to 264 (RLR) is a binding site for GTP. Position 274 (cysteine 274) interacts with [4Fe-4S] cluster.

Belongs to the radical SAM superfamily. MoaA family. Monomer and homodimer. [4Fe-4S] cluster is required as a cofactor.

The catalysed reaction is GTP + AH2 + S-adenosyl-L-methionine = (8S)-3',8-cyclo-7,8-dihydroguanosine 5'-triphosphate + 5'-deoxyadenosine + L-methionine + A + H(+). The protein operates within cofactor biosynthesis; molybdopterin biosynthesis. In terms of biological role, catalyzes the cyclization of GTP to (8S)-3',8-cyclo-7,8-dihydroguanosine 5'-triphosphate. The sequence is that of GTP 3',8-cyclase from Shigella boydii serotype 18 (strain CDC 3083-94 / BS512).